Reading from the N-terminus, the 292-residue chain is Homoserine kinase (292 aa).

Residue 81 to 91 participates in ATP binding; it reads RPRSGLGSSGA.

It belongs to the GHMP kinase family. Homoserine kinase subfamily.

Its subcellular location is the cytoplasm. It carries out the reaction L-homoserine + ATP = O-phospho-L-homoserine + ADP + H(+). The protein operates within amino-acid biosynthesis; L-threonine biosynthesis; L-threonine from L-aspartate: step 4/5. Its function is as follows. Catalyzes the ATP-dependent phosphorylation of L-homoserine to L-homoserine phosphate. The chain is Homoserine kinase from Thermococcus kodakarensis (strain ATCC BAA-918 / JCM 12380 / KOD1) (Pyrococcus kodakaraensis (strain KOD1)).